A 601-amino-acid polypeptide reads, in one-letter code: NADH-quinone oxidoreductase subunit C/D (601 aa).

The NADH dehydrogenase I subunit C stretch occupies residues 1 to 191; the sequence is MKLTREFPSN…DPFMLDAVKQ (191 aa). The NADH dehydrogenase I subunit D stretch occupies residues 215 to 601; the sequence is DYMFLNLGPN…IDFVMSDVDR (387 aa).

This sequence in the N-terminal section; belongs to the complex I 30 kDa subunit family. In the C-terminal section; belongs to the complex I 49 kDa subunit family. In terms of assembly, NDH-1 is composed of 13 different subunits. Subunits NuoB, CD, E, F, and G constitute the peripheral sector of the complex.

It localises to the cell inner membrane. It catalyses the reaction a quinone + NADH + 5 H(+)(in) = a quinol + NAD(+) + 4 H(+)(out). In terms of biological role, NDH-1 shuttles electrons from NADH, via FMN and iron-sulfur (Fe-S) centers, to quinones in the respiratory chain. The immediate electron acceptor for the enzyme in this species is believed to be ubiquinone. Couples the redox reaction to proton translocation (for every two electrons transferred, four hydrogen ions are translocated across the cytoplasmic membrane), and thus conserves the redox energy in a proton gradient. The protein is NADH-quinone oxidoreductase subunit C/D of Aeromonas hydrophila subsp. hydrophila (strain ATCC 7966 / DSM 30187 / BCRC 13018 / CCUG 14551 / JCM 1027 / KCTC 2358 / NCIMB 9240 / NCTC 8049).